The following is a 208-amino-acid chain: A-type ATP synthase subunit E (208 aa).

This sequence belongs to the V-ATPase E subunit family. In terms of assembly, has multiple subunits with at least A(3), B(3), C, D, E, F, H, I and proteolipid K(x).

The protein resides in the cell membrane. Functionally, component of the A-type ATP synthase that produces ATP from ADP in the presence of a proton gradient across the membrane. This is A-type ATP synthase subunit E from Ignicoccus hospitalis (strain KIN4/I / DSM 18386 / JCM 14125).